The chain runs to 179 residues: ATP-dependent protease subunit HslV (179 aa).

T7 is an active-site residue. 3 residues coordinate Na(+): G162, C165, and T168.

The protein belongs to the peptidase T1B family. HslV subfamily. A double ring-shaped homohexamer of HslV is capped on each side by a ring-shaped HslU homohexamer. The assembly of the HslU/HslV complex is dependent on binding of ATP.

It localises to the cytoplasm. It catalyses the reaction ATP-dependent cleavage of peptide bonds with broad specificity.. Its activity is regulated as follows. Allosterically activated by HslU binding. Protease subunit of a proteasome-like degradation complex believed to be a general protein degrading machinery. This Saccharophagus degradans (strain 2-40 / ATCC 43961 / DSM 17024) protein is ATP-dependent protease subunit HslV.